We begin with the raw amino-acid sequence, 125 residues long: Holo-[acyl-carrier-protein] synthase (125 aa).

Residues Glu-9 and Gln-58 each contribute to the Mg(2+) site.

It belongs to the P-Pant transferase superfamily. AcpS family. Mg(2+) serves as cofactor.

It localises to the cytoplasm. It catalyses the reaction apo-[ACP] + CoA = holo-[ACP] + adenosine 3',5'-bisphosphate + H(+). In terms of biological role, transfers the 4'-phosphopantetheine moiety from coenzyme A to a Ser of acyl-carrier-protein. This is Holo-[acyl-carrier-protein] synthase from Rhodopirellula baltica (strain DSM 10527 / NCIMB 13988 / SH1).